Here is a 397-residue protein sequence, read N- to C-terminus: 8-amino-7-oxononanoate synthase (397 aa).

R21 is a substrate binding site. Position 110–111 (110–111 (GY)) interacts with pyridoxal 5'-phosphate. H135 is a binding site for substrate. Residues S181, H209, and T238 each contribute to the pyridoxal 5'-phosphate site. K241 carries the N6-(pyridoxal phosphate)lysine modification. T355 provides a ligand contact to substrate.

It belongs to the class-II pyridoxal-phosphate-dependent aminotransferase family. BioF subfamily. As to quaternary structure, homodimer. Pyridoxal 5'-phosphate serves as cofactor.

The catalysed reaction is 6-carboxyhexanoyl-[ACP] + L-alanine + H(+) = (8S)-8-amino-7-oxononanoate + holo-[ACP] + CO2. Its pathway is cofactor biosynthesis; biotin biosynthesis. Its function is as follows. Catalyzes the decarboxylative condensation of pimeloyl-[acyl-carrier protein] and L-alanine to produce 8-amino-7-oxononanoate (AON), [acyl-carrier protein], and carbon dioxide. In Saccharophagus degradans (strain 2-40 / ATCC 43961 / DSM 17024), this protein is 8-amino-7-oxononanoate synthase.